Consider the following 132-residue polypeptide: Antileukoproteinase (132 aa).

The N-terminal stretch at 1–25 is a signal peptide; sequence MKSSGLFPFLVLLALGTLAPWAVEG. WAP domains follow at residues 28 to 76 and 82 to 130; these read KSFK…LDPV and TRRK…VSPV. Disulfide bonds link C35/C64, C43/C68, C51/C63, C57/C72, C89/C118, C96/C122, C105/C117, and C111/C126. The elastase inhibitory domain stretch occupies residues 84-132; the sequence is RKPGKCPVTYGQCLMLNPPNFCEMDGQCKRDLKCCMGMCGKSCVSPVKA.

In terms of assembly, interacts with GRN; interaction protects progranulin from proteolysis. In terms of tissue distribution, detected in blood plasma. Detected in bone marrow myeloid cells. Detected in airway sputum. Detected in parotid gland secretions. Detected in seminal plasma (at protein level). Detected in uterus cervix.

The protein resides in the secreted. In terms of biological role, acid-stable proteinase inhibitor with strong affinities for trypsin, chymotrypsin, elastase, and cathepsin G. Modulates the inflammatory and immune responses after bacterial infection, and after infection by the intracellular parasite L.major. Down-regulates responses to bacterial lipopolysaccharide (LPS). Plays a role in regulating the activation of NF-kappa-B and inflammatory responses. Has antimicrobial activity against mycobacteria, but not against salmonella. Contributes to normal resistance against infection by M.tuberculosis. Required for normal resistance to infection by L.major. Required for normal wound healing, probably by preventing tissue damage by limiting protease activity. Together with ELANE, required for normal differentiation and proliferation of bone marrow myeloid cells. This is Antileukoproteinase (SLPI) from Homo sapiens (Human).